The following is a 309-amino-acid chain: 4-hydroxy-3-methylbut-2-enyl diphosphate reductase (309 aa).

Cys12 serves as a coordination point for [4Fe-4S] cluster. Residues His41 and His74 each contribute to the (2E)-4-hydroxy-3-methylbut-2-enyl diphosphate site. Dimethylallyl diphosphate-binding residues include His41 and His74. 2 residues coordinate isopentenyl diphosphate: His41 and His74. Cys96 contacts [4Fe-4S] cluster. (2E)-4-hydroxy-3-methylbut-2-enyl diphosphate is bound at residue His124. His124 is a dimethylallyl diphosphate binding site. An isopentenyl diphosphate-binding site is contributed by His124. The Proton donor role is filled by Glu126. Thr167 lines the (2E)-4-hydroxy-3-methylbut-2-enyl diphosphate pocket. Cys197 provides a ligand contact to [4Fe-4S] cluster. Positions 225, 226, 227, and 269 each coordinate (2E)-4-hydroxy-3-methylbut-2-enyl diphosphate. The dimethylallyl diphosphate site is built by Ser225, Ser226, Asn227, and Ser269. Isopentenyl diphosphate-binding residues include Ser225, Ser226, Asn227, and Ser269.

The protein belongs to the IspH family. [4Fe-4S] cluster serves as cofactor.

It catalyses the reaction isopentenyl diphosphate + 2 oxidized [2Fe-2S]-[ferredoxin] + H2O = (2E)-4-hydroxy-3-methylbut-2-enyl diphosphate + 2 reduced [2Fe-2S]-[ferredoxin] + 2 H(+). It carries out the reaction dimethylallyl diphosphate + 2 oxidized [2Fe-2S]-[ferredoxin] + H2O = (2E)-4-hydroxy-3-methylbut-2-enyl diphosphate + 2 reduced [2Fe-2S]-[ferredoxin] + 2 H(+). Its pathway is isoprenoid biosynthesis; dimethylallyl diphosphate biosynthesis; dimethylallyl diphosphate from (2E)-4-hydroxy-3-methylbutenyl diphosphate: step 1/1. The protein operates within isoprenoid biosynthesis; isopentenyl diphosphate biosynthesis via DXP pathway; isopentenyl diphosphate from 1-deoxy-D-xylulose 5-phosphate: step 6/6. Functionally, catalyzes the conversion of 1-hydroxy-2-methyl-2-(E)-butenyl 4-diphosphate (HMBPP) into a mixture of isopentenyl diphosphate (IPP) and dimethylallyl diphosphate (DMAPP). Acts in the terminal step of the DOXP/MEP pathway for isoprenoid precursor biosynthesis. This Shewanella halifaxensis (strain HAW-EB4) protein is 4-hydroxy-3-methylbut-2-enyl diphosphate reductase.